We begin with the raw amino-acid sequence, 459 residues long: UDP-N-acetylmuramate--L-alanine ligase (459 aa).

113–119 is an ATP binding site; it reads GSHGKTS.

This sequence belongs to the MurCDEF family.

The protein localises to the cytoplasm. It catalyses the reaction UDP-N-acetyl-alpha-D-muramate + L-alanine + ATP = UDP-N-acetyl-alpha-D-muramoyl-L-alanine + ADP + phosphate + H(+). It functions in the pathway cell wall biogenesis; peptidoglycan biosynthesis. Functionally, cell wall formation. This Desulfotalea psychrophila (strain LSv54 / DSM 12343) protein is UDP-N-acetylmuramate--L-alanine ligase.